Consider the following 272-residue polypeptide: Adenylate kinase (272 aa).

Position 55–60 (55–60 (GAGKGT)) interacts with ATP. The NMP stretch occupies residues 75–104 (ATGDMLRSQVAKKTPLGKEAKKIMDQGGLV). AMP-binding positions include Thr76, Arg81, 102-104 (GLV), 131-134 (GFPR), and Gln138. Residues 172-209 (GRLVHPASGRSYHKIFNPPKQDMKDDITGEPLIQRSDD) are LID. Residues Arg173 and 182–183 (SY) contribute to the ATP site. AMP is bound by residues Arg206 and Arg217. An ATP-binding site is contributed by Gln245.

This sequence belongs to the adenylate kinase family. AK2 subfamily. In terms of assembly, monomer.

Its subcellular location is the cytoplasm. The protein localises to the cytosol. It is found in the mitochondrion intermembrane space. The catalysed reaction is AMP + ATP = 2 ADP. In terms of biological role, catalyzes the reversible transfer of the terminal phosphate group between ATP and AMP. Plays an important role in cellular energy homeostasis and in adenine nucleotide metabolism. Adenylate kinase activity is critical for regulation of the phosphate utilization and the AMP de novo biosynthesis pathways. This chain is Adenylate kinase (adk1), found in Talaromyces marneffei (Penicillium marneffei).